Reading from the N-terminus, the 184-residue chain is Large ribosomal subunit protein uL5 (184 aa).

This sequence belongs to the universal ribosomal protein uL5 family. In terms of assembly, part of the 50S ribosomal subunit; part of the 5S rRNA/L5/L18/L25 subcomplex. Contacts the 5S rRNA and the P site tRNA. Forms a bridge to the 30S subunit in the 70S ribosome.

This is one of the proteins that bind and probably mediate the attachment of the 5S RNA into the large ribosomal subunit, where it forms part of the central protuberance. In the 70S ribosome it contacts protein S13 of the 30S subunit (bridge B1b), connecting the 2 subunits; this bridge is implicated in subunit movement. Contacts the P site tRNA; the 5S rRNA and some of its associated proteins might help stabilize positioning of ribosome-bound tRNAs. The polypeptide is Large ribosomal subunit protein uL5 (Pelagibacter ubique (strain HTCC1062)).